The following is an 835-amino-acid chain: Prickle-like protein 1-A (835 aa).

The PET domain maps to 14 to 122 (FGCQRSSTSD…NIKMLSRAVM (109 aa)). LIM zinc-binding domains are found at residues 124–188 (ATCE…ELLK), 189–249 (PRCS…HYAE), and 250–313 (YCES…EDVH). 4 disordered regions span residues 312 to 346 (VHAS…ADQC), 426 to 455 (LFQQ…QRNN), 603 to 706 (CQEK…RKRS), and 769 to 835 (CSSS…CIIS). Basic and acidic residues-rich tracts occupy residues 432–453 (EDNR…DLQR), 603–614 (CQEKPPPEEKPM), and 646–655 (EIRRPPMSER). Basic residues-rich tracts occupy residues 669 to 683 (RPHH…KSRK) and 819 to 835 (SKSK…CIIS). C832 carries the cysteine methyl ester modification. Residue C832 is the site of S-farnesyl cysteine attachment. A propeptide spans 833 to 835 (IIS) (removed in mature form).

Belongs to the prickle / espinas / testin family. As to quaternary structure, interacts with dvl2/dsh and mapk8/jnk1. In terms of tissue distribution, expressed in the dorsal marginal zone of early gastrulae (stage 10). As gastrulation proceeds, expression expands to include the lateral and ventral marginal zones, excluding the few rows of cells above the blastopore lip. Expression moves dorsally with gastrulation cell movements, and by the end of gastrulation expression is seen in dorsal mesoderm and posterior but not anterior neural ectoderm. Expression becomes down-regulated in mesoderm but remains strong in posterior ectoderm through the neurula stages. During tailbud stages, expressed in the pronephric duct, tailbud, tailtip and forming somites. In the most posterior regions, expressed in notochord and in the floorplate of the neural tube with weak expression in the roofplate. At stage 30, expressed in a complex pattern in the head including strong expression in the lens and otic vesicle.

Its subcellular location is the cell membrane. Functionally, acts in a planar cell polarity (PCP) complex; polarization along the apical/basal axis of epithelial cells. Regulates the polarized assembly of fibronectrin on the surface of the mesoderm during gastrulation. Essential for gastrulation cell movements, cooperating with dvl2/dsh to activate jnk. Acts together with tes to control axial elongation. This is Prickle-like protein 1-A (prickle1-a) from Xenopus laevis (African clawed frog).